The chain runs to 407 residues: Argininosuccinate synthase (407 aa).

Residues 16–24 (AYSGGLDTS) and A44 contribute to the ATP site. L-citrulline-binding residues include Y96 and S101. Position 126 (G126) interacts with ATP. Residues T128, N132, and D133 each contribute to the L-aspartate site. Residue N132 participates in L-citrulline binding. L-citrulline-binding residues include R136, S185, S194, E270, and Y282.

Belongs to the argininosuccinate synthase family. Type 1 subfamily. Homotetramer.

The protein localises to the cytoplasm. The enzyme catalyses L-citrulline + L-aspartate + ATP = 2-(N(omega)-L-arginino)succinate + AMP + diphosphate + H(+). It participates in amino-acid biosynthesis; L-arginine biosynthesis; L-arginine from L-ornithine and carbamoyl phosphate: step 2/3. The chain is Argininosuccinate synthase from Shewanella loihica (strain ATCC BAA-1088 / PV-4).